A 254-amino-acid polypeptide reads, in one-letter code: Glycerol operon regulatory protein (254 aa).

One can recognise an HTH iclR-type domain in the interval 5-67; the sequence is IQSLERAAAM…DASGRYQLGA (63 aa). A DNA-binding region (H-T-H motif) is located at residues 27–46; that stretch reads LSDIASSLGLAKGTAHGILR. Positions 82 to 251 constitute an IclR-ED domain; the sequence is LRARALVWTD…ARAVSRDLGA (170 aa).

Its function is as follows. May be an activator protein for the gylABX operon. The polypeptide is Glycerol operon regulatory protein (gylR) (Streptomyces coelicolor (strain ATCC BAA-471 / A3(2) / M145)).